The sequence spans 689 residues: Methionine--tRNA ligase (689 aa).

The short motif at 15–25 (PYANGPIHLGH) is the 'HIGH' region element. 4 residues coordinate Zn(2+): C146, C149, C159, and C162. Positions 332–336 (KMSKS) match the 'KMSKS' region motif. An ATP-binding site is contributed by K335. Positions 588–689 (DFAKIDLRIA…EGAQPGMRVK (102 aa)) constitute a tRNA-binding domain.

This sequence belongs to the class-I aminoacyl-tRNA synthetase family. MetG type 1 subfamily. In terms of assembly, homodimer. Zn(2+) is required as a cofactor.

The protein localises to the cytoplasm. The enzyme catalyses tRNA(Met) + L-methionine + ATP = L-methionyl-tRNA(Met) + AMP + diphosphate. In terms of biological role, is required not only for elongation of protein synthesis but also for the initiation of all mRNA translation through initiator tRNA(fMet) aminoacylation. In Shewanella baltica (strain OS223), this protein is Methionine--tRNA ligase.